Here is a 390-residue protein sequence, read N- to C-terminus: Chorismate synthase (390 aa).

Arg-48 lines the NADP(+) pocket. FMN contacts are provided by residues 126–128 (RAS), Gly-286, 301–305 (KPTSS), and Arg-328.

It belongs to the chorismate synthase family. The cofactor is FMNH2.

The enzyme catalyses 5-O-(1-carboxyvinyl)-3-phosphoshikimate = chorismate + phosphate. It participates in metabolic intermediate biosynthesis; chorismate biosynthesis; chorismate from D-erythrose 4-phosphate and phosphoenolpyruvate: step 7/7. Its function is as follows. Catalyzes the anti-1,4-elimination of the C-3 phosphate and the C-6 proR hydrogen from 5-enolpyruvylshikimate-3-phosphate (EPSP) to yield chorismate, which is the branch point compound that serves as the starting substrate for the three terminal pathways of aromatic amino acid biosynthesis. This reaction introduces a second double bond into the aromatic ring system. This Sulfurisphaera tokodaii (strain DSM 16993 / JCM 10545 / NBRC 100140 / 7) (Sulfolobus tokodaii) protein is Chorismate synthase.